Consider the following 32-residue polypeptide: uncharacterized protein (32 aa).

This is an uncharacterized protein from Saccharomyces cerevisiae (strain ATCC 204508 / S288c) (Baker's yeast).